The primary structure comprises 291 residues: Putative GATA transcription factor 13 (291 aa).

The GATA-type zinc finger occupies 187–241 (KSRRLKCTHCETTTTPQWREGPNGRKTLCNACGIRFRSGRLVLEYRPAASPTFIP). The segment at 271 to 291 (TSGPETRSRLRNFGRPMSYGQ) is disordered.

The protein belongs to the type IV zinc-finger family. Class A subfamily.

It is found in the nucleus. Its function is as follows. Transcriptional activator that specifically binds 5'-GATA-3' or 5'-GAT-3' motifs within gene promoters. May be involved in the regulation of some light-responsive genes. This Arabidopsis thaliana (Mouse-ear cress) protein is Putative GATA transcription factor 13 (GATA13).